The chain runs to 209 residues: MTAKKRSASSTRWMQEHFDDHYVKLAQKRGLRSRAAFKLEELQEKDHLIKPGMTVVDLGAAPGGWSQVAVKLVGDRGKVIACDILPMDPIVGVDFLQGDFREDAVLNALLERVGDEKVDVVLSDMAPNMSGSDGVDQPRAMYLVELALDMCHQVLAPNGSFAVKVFQGEGFDEYMKAVREAFKVVKTRKPDSSRARSREVYLVATGYKL.

Gly-63, Trp-65, Asp-83, Asp-99, and Asp-124 together coordinate S-adenosyl-L-methionine. Lys-164 (proton acceptor) is an active-site residue.

Belongs to the class I-like SAM-binding methyltransferase superfamily. RNA methyltransferase RlmE family.

The protein localises to the cytoplasm. It catalyses the reaction uridine(2552) in 23S rRNA + S-adenosyl-L-methionine = 2'-O-methyluridine(2552) in 23S rRNA + S-adenosyl-L-homocysteine + H(+). Its function is as follows. Specifically methylates the uridine in position 2552 of 23S rRNA at the 2'-O position of the ribose in the fully assembled 50S ribosomal subunit. The polypeptide is Ribosomal RNA large subunit methyltransferase E (Shewanella amazonensis (strain ATCC BAA-1098 / SB2B)).